Here is a 428-residue protein sequence, read N- to C-terminus: MGNKVVVGTQWGDEGKGKITDMLARTADVVVRYGGGNNAGHTVIVDGKKFELHLIPSGILYPEKVNVIGNGVVVDPEALVEEMNMLKEEGISLNNLYVSETAHVIMPYHRLLDKLEEKRKGDGKIGTTGRGIGPAYTDKVARRGLRVIDLLDEDTFYEKLKLALDYQNLLLEKVYQVEPMDIKEIMAQYKEYIEVLRPHVTNTSLLLDEAIKEDKKIFFEGAQGTLLDIDYGTYPYVTSSNPTAGGVCTGTGVGPVWIDDVIGVVKAYLTRVGEGPFPTELNNDIGDKLRDKGHEYGVTTGRPRRCGWLDIPILKHAVRVNGLTELALTKLDVLSGLREVKVCTGYRYGDRLIEEFPGNIDILSGCEPVYEVLPGWDDDITGVREYGDLPENARRYVKLIEDMVKVPVTIIGVGPGRKEAIRREKEVN.

Residues 12–18 (GDEGKGK) and 40–42 (GHT) contribute to the GTP site. The active-site Proton acceptor is the D13. Residues D13 and G40 each coordinate Mg(2+). Residues 13-16 (DEGK), 38-41 (NAGH), T128, R142, Q223, T238, and R302 each bind IMP. The active-site Proton donor is H41. 298-304 (VTTGRPR) serves as a coordination point for substrate. GTP is bound by residues R304, 330–332 (KLD), and 412–414 (GVG).

Belongs to the adenylosuccinate synthetase family. As to quaternary structure, homodimer. It depends on Mg(2+) as a cofactor.

It is found in the cytoplasm. It catalyses the reaction IMP + L-aspartate + GTP = N(6)-(1,2-dicarboxyethyl)-AMP + GDP + phosphate + 2 H(+). It functions in the pathway purine metabolism; AMP biosynthesis via de novo pathway; AMP from IMP: step 1/2. Functionally, plays an important role in the de novo pathway of purine nucleotide biosynthesis. Catalyzes the first committed step in the biosynthesis of AMP from IMP. This chain is Adenylosuccinate synthetase, found in Halothermothrix orenii (strain H 168 / OCM 544 / DSM 9562).